We begin with the raw amino-acid sequence, 347 residues long: GMP reductase (347 aa).

An NADP(+)-binding site is contributed by Ala108–Ala131. Positions 181 and 183 each coordinate K(+). The active-site Thioimidate intermediate is the Cys186. Ile216–Val239 is an NADP(+) binding site.

This sequence belongs to the IMPDH/GMPR family. GuaC type 1 subfamily. In terms of assembly, homotetramer.

It carries out the reaction IMP + NH4(+) + NADP(+) = GMP + NADPH + 2 H(+). Functionally, catalyzes the irreversible NADPH-dependent deamination of GMP to IMP. It functions in the conversion of nucleobase, nucleoside and nucleotide derivatives of G to A nucleotides, and in maintaining the intracellular balance of A and G nucleotides. This Salmonella typhi protein is GMP reductase.